The primary structure comprises 506 residues: DEAD-box ATP-dependent RNA helicase CshA (506 aa).

The Q motif signature appears at 2 to 30 (QNFKELGISDNTVQSLESMGFKEPTPIQK). Residues 33–203 (IPYALQGIDI…QQFMKSPKII (171 aa)) form the Helicase ATP-binding domain. 46 to 53 (AQTGTGKT) is a binding site for ATP. Positions 150–153 (DEAD) match the DEAD box motif. The 162-residue stretch at 214–375 (QIEEFYTIVK…LRPPHRKEVL (162 aa)) folds into the Helicase C-terminal domain. The segment at 436-506 (EKPLSRKGRN…KGRTFADHQK (71 aa)) is disordered. Over residues 468-480 (KRSKGYSSKKKST) the composition is skewed to basic residues.

This sequence belongs to the DEAD box helicase family. CshA subfamily. As to quaternary structure, oligomerizes, may be a member of the RNA degradosome.

The protein resides in the cytoplasm. The enzyme catalyses ATP + H2O = ADP + phosphate + H(+). DEAD-box RNA helicase possibly involved in RNA degradation. Unwinds dsRNA in both 5'- and 3'-directions, has RNA-dependent ATPase activity. The chain is DEAD-box ATP-dependent RNA helicase CshA from Staphylococcus aureus (strain bovine RF122 / ET3-1).